A 296-amino-acid chain; its full sequence is NAD kinase (296 aa).

Asp-72 functions as the Proton acceptor in the catalytic mechanism. NAD(+) contacts are provided by residues 72 to 73 (DG), 146 to 147 (ND), Arg-157, Lys-174, Asp-176, 187 to 192 (TAYALS), and Gln-247.

It belongs to the NAD kinase family. A divalent metal cation serves as cofactor.

Its subcellular location is the cytoplasm. The catalysed reaction is NAD(+) + ATP = ADP + NADP(+) + H(+). In terms of biological role, involved in the regulation of the intracellular balance of NAD and NADP, and is a key enzyme in the biosynthesis of NADP. Catalyzes specifically the phosphorylation on 2'-hydroxyl of the adenosine moiety of NAD to yield NADP. The sequence is that of NAD kinase from Pseudomonas syringae pv. syringae (strain B728a).